A 491-amino-acid chain; its full sequence is F-box/LRR-repeat protein 7 (491 aa).

Residues 1–79 (MGANNGKQYG…GRGSSTSSSS (79 aa)) are disordered. Positions 10-26 (GSEGKGSSSISSDVSSS) are enriched in low complexity. Over residues 27–55 (TDHTPTKAQKNVATSEDSDLSMRTLSTPS) the composition is skewed to polar residues. In terms of domain architecture, F-box spans 111–157 (QASIDRLPDHSMVQIFSFLPTNQLCRCARVCRRWYNLAWDPRLWRTI). LRR repeat units follow at residues 170-195 (LKVL…TVSG), 196-221 (CRRL…EVSG), 222-247 (CYNI…DVSG), 253-281 (CISL…DMTD), 282-307 (CFVL…YLRR), 308-333 (CVRL…SVSD), 334-359 (CRFV…SIAH), 360-385 (CGRV…NARG), 386-411 (CEGI…DIGK), 412-437 (CPLV…SLKS), and 438-463 (CESI…NVQD).

This sequence belongs to the FBXL7 family. In terms of assembly, part of the SCF (SKP1-CUL1-F-box) E3 ubiquitin-protein ligase complex SCF(FBXL7) composed of CUL1, SKP1, RBX1 and FBXL7. Interacts with AURKA; interaction takes place during mitosis but not in interphase. Interacts with BIRC5; this interaction allows BIRC5 to be polyubiquitinated by the SCF(FBXL7) E3 ubiquitin-protein ligase complex.

The protein localises to the cytoplasm. It is found in the cytoskeleton. Its subcellular location is the microtubule organizing center. The protein resides in the centrosome. It functions in the pathway protein modification; protein ubiquitination. Its function is as follows. Substrate recognition component of a SCF (SKP1-CUL1-F-box protein) E3 ubiquitin-protein ligase complex. During mitosis, it mediates the ubiquitination and subsequent proteasomal degradation of AURKA, causing mitotic arrest. It also regulates mitochondrial function by mediating the ubiquitination and proteasomal degradation of the apoptosis inhibitor BIRC5. The polypeptide is F-box/LRR-repeat protein 7 (FBXL7) (Homo sapiens (Human)).